A 301-amino-acid chain; its full sequence is tRNA dimethylallyltransferase (301 aa).

10–17 (GATATGKT) is a binding site for ATP. Position 12–17 (12–17 (TATGKT)) interacts with substrate. The interaction with substrate tRNA stretch occupies residues 35–38 (DSRQ).

Belongs to the IPP transferase family. In terms of assembly, monomer. Requires Mg(2+) as cofactor.

The enzyme catalyses adenosine(37) in tRNA + dimethylallyl diphosphate = N(6)-dimethylallyladenosine(37) in tRNA + diphosphate. Its function is as follows. Catalyzes the transfer of a dimethylallyl group onto the adenine at position 37 in tRNAs that read codons beginning with uridine, leading to the formation of N6-(dimethylallyl)adenosine (i(6)A). The sequence is that of tRNA dimethylallyltransferase from Crocosphaera subtropica (strain ATCC 51142 / BH68) (Cyanothece sp. (strain ATCC 51142)).